An 858-amino-acid polypeptide reads, in one-letter code: DNA mismatch repair protein MutS (858 aa).

637-644 serves as a coordination point for ATP; the sequence is GPNMAGKS.

Belongs to the DNA mismatch repair MutS family.

In terms of biological role, this protein is involved in the repair of mismatches in DNA. It is possible that it carries out the mismatch recognition step. This protein has a weak ATPase activity. The sequence is that of DNA mismatch repair protein MutS from Protochlamydia amoebophila (strain UWE25).